The chain runs to 130 residues: Small ribosomal subunit protein uS8 (130 aa).

Belongs to the universal ribosomal protein uS8 family. In terms of assembly, part of the 30S ribosomal subunit. Contacts proteins S5 and S12.

Functionally, one of the primary rRNA binding proteins, it binds directly to 16S rRNA central domain where it helps coordinate assembly of the platform of the 30S subunit. The protein is Small ribosomal subunit protein uS8 of Pseudomonas fluorescens (strain SBW25).